A 316-amino-acid polypeptide reads, in one-letter code: RNA interference defective protein 11 (316 aa).

The RING-type; degenerate zinc-finger motif lies at 183 to 218 (CYINFNCQTSKVMFGCGHVYCEQCLNSWNDKPCSVC).

In terms of assembly, interacts (via RING-type zinc finger domain) with rde-10.

In complex with rde-10, required in the endogenous and exogenous siRNA pathway for biogenesis and accumulation of secondary small interfering RNA (siRNA) intermediates, such as 22G-siRNAs derived from ergo-1 targets. This Caenorhabditis elegans protein is RNA interference defective protein 11.